We begin with the raw amino-acid sequence, 1941 residues long: Myosin-2 (1941 aa).

A Myosin N-terminal SH3-like domain is found at 33–82 (DAKTSVFVAEPKESFVKGTIQSREGGKVTVKTEGGATLTVKDDQVFPMNP). Phosphothreonine is present on residues threonine 64 and threonine 69. A Myosin motor domain is found at 86-784 (DKIEDMAMMT…LLGLLEEMRD (699 aa)). Lysine 130 is subject to N6,N6,N6-trimethyllysine. 179 to 186 (GESGAGKT) is an ATP binding site. At tyrosine 389 the chain carries Phosphotyrosine. Serine 392 bears the Phosphoserine mark. Residue threonine 419 is modified to Phosphothreonine. Serine 625 carries the phosphoserine modification. The segment at 661–683 (LNKLMTNLRSTHPHFVRCIIPNE) is actin-binding. Histidine 759 carries the pros-methylhistidine modification. The interval 763 to 777 (KFGHTKVFFKAGLLG) is actin-binding. Positions 787 to 816 (LAQLITRTQARCRGFLARVEYQRMVERREA) constitute an IQ domain. Positions 845–1941 (LLKSAETEKE…EVHTKVISEE (1097 aa)) form a coiled coil. Phosphoserine occurs at positions 1094 and 1098. 2 disordered regions span residues 1128–1149 (IEAERASRAKAEKQRSDLSREL) and 1155–1174 (RLEEAGGATSAQIEMNKKRE). The segment covering 1130 to 1149 (AERASRAKAEKQRSDLSREL) has biased composition (basic and acidic residues). Residues serine 1164 and serine 1239 each carry the phosphoserine modification. Threonine 1243 carries the post-translational modification Phosphothreonine. Serine 1245 is modified (phosphoserine). Threonine 1257 is subject to Phosphothreonine. Residue serine 1263 is modified to Phosphoserine. Residue threonine 1288 is modified to Phosphothreonine. Phosphoserine is present on residues serine 1290, serine 1294, serine 1305, and serine 1308. At threonine 1469 the chain carries Phosphothreonine. Serine 1476 is modified (phosphoserine). Phosphotyrosine is present on tyrosine 1494. Residue serine 1497 is modified to Phosphoserine. The residue at position 1503 (threonine 1503) is a Phosphothreonine. Position 1516 is a phosphoserine (serine 1516). At threonine 1519 the chain carries Phosphothreonine. Serine 1556, serine 1576, serine 1602, serine 1605, serine 1716, and serine 1728 each carry phosphoserine. Residues threonine 1732 and threonine 1738 each carry the phosphothreonine modification. Serine 1741 carries the post-translational modification Phosphoserine.

This sequence belongs to the TRAFAC class myosin-kinesin ATPase superfamily. Myosin family. Muscle myosin is a hexameric protein that consists of 2 heavy chain subunits (MHC), 2 alkali light chain subunits (MLC) and 2 regulatory light chain subunits (MLC-2). Interacts with GCSAM.

The protein localises to the cytoplasm. Its subcellular location is the myofibril. Its function is as follows. Myosins are actin-based motor molecules with ATPase activity essential for muscle contraction. The sequence is that of Myosin-2 from Homo sapiens (Human).